We begin with the raw amino-acid sequence, 503 residues long: Probable cytosol aminopeptidase (503 aa).

Mn(2+) is bound by residues K270 and D275. Residue K282 is part of the active site. Positions 293, 352, and 354 each coordinate Mn(2+). Residue R356 is part of the active site.

This sequence belongs to the peptidase M17 family. It depends on Mn(2+) as a cofactor.

The protein localises to the cytoplasm. It carries out the reaction Release of an N-terminal amino acid, Xaa-|-Yaa-, in which Xaa is preferably Leu, but may be other amino acids including Pro although not Arg or Lys, and Yaa may be Pro. Amino acid amides and methyl esters are also readily hydrolyzed, but rates on arylamides are exceedingly low.. It catalyses the reaction Release of an N-terminal amino acid, preferentially leucine, but not glutamic or aspartic acids.. Its function is as follows. Presumably involved in the processing and regular turnover of intracellular proteins. Catalyzes the removal of unsubstituted N-terminal amino acids from various peptides. This is Probable cytosol aminopeptidase from Salmonella arizonae (strain ATCC BAA-731 / CDC346-86 / RSK2980).